The primary structure comprises 456 residues: Gamma-aminobutyric acid receptor subunit alpha-1 (456 aa).

The signal sequence occupies residues 1-27 (MKKSPGLSDYLWAWTLFLSTLTGRSYG). At 28–253 (QPSLQDELKD…FHLKRKIGYF (226 aa)) the chain is on the extracellular side. N38 carries an N-linked (GlcNAc...) asparagine glycan. R94 lines the 4-aminobutanoate pocket. N-linked (GlcNAc...) asparagine glycosylation is present at N138. T157 is a binding site for 4-aminobutanoate. C166 and C180 are oxidised to a cystine. A helical membrane pass occupies residues 254–274 (VIQTYLPCIMTVILSQVSFWL). The Cytoplasmic portion of the chain corresponds to 275–279 (NRESV). Residues 280 to 301 (PARTVFGVTTVLTMTTLSISAR) form a helical membrane-spanning segment. The Extracellular portion of the chain corresponds to 302–311 (NSLPKVAYAT). A helical membrane pass occupies residues 312–333 (AMDWFIAVCYAFVFSALIEFAT). The Cytoplasmic segment spans residues 334–421 (VNYFTKRGYA…TFNSVSKIDR (88 aa)). The helical transmembrane segment at 422 to 441 (LSRIAFPLLFGIFNLVYWAT) threads the bilayer. Residues 442–456 (YLNREPQLKAPTPHQ) are Extracellular-facing.

Belongs to the ligand-gated ion channel (TC 1.A.9) family. Gamma-aminobutyric acid receptor (TC 1.A.9.5) subfamily. GABRA1 sub-subfamily. As to quaternary structure, heteropentamer, formed by a combination of alpha (GABRA1-6), beta (GABRB1-3), gamma (GABRG1-3), delta (GABRD), epsilon (GABRE), rho (GABRR1-3), pi (GABRP) and theta (GABRQ) subunits, each subunit exhibiting distinct physiological and pharmacological properties. Interacts with UBQLN1. Interacts with TRAK1. Interacts with KIF21B. Identified in a complex of 720 kDa composed of LHFPL4, NLGN2, GABRA1, GABRB2, GABRG2 and GABRB3. Interacts with LHFPL4. Interacts with NLGN2. Interacts with SHISA7; interaction leads to the regulation of GABA(A) receptor trafficking, channel deactivation kinetics and pharmacology. Cerebellar granule cells, Purkinje cells and stellate/basket cells.

It localises to the postsynaptic cell membrane. The protein localises to the cell membrane. The protein resides in the cytoplasmic vesicle membrane. The enzyme catalyses chloride(in) = chloride(out). Allosterically activated by benzodiazepines, the neuroanesthetic alphaxalone and pentobarbital. Inhibited by the antagonist bicuculline. Potentiated by histamine. Its function is as follows. Alpha subunit of the heteropentameric ligand-gated chloride channel gated by gamma-aminobutyric acid (GABA), a major inhibitory neurotransmitter in the brain. GABA-gated chloride channels, also named GABA(A) receptors (GABAAR), consist of five subunits arranged around a central pore and contain GABA active binding site(s) located at the alpha and beta subunit interface(s). When activated by GABA, GABAARs selectively allow the flow of chloride anions across the cell membrane down their electrochemical gradient. Alpha-1/GABRA1-containing GABAARs are largely synaptic. Chloride influx into the postsynaptic neuron following GABAAR opening decreases the neuron ability to generate a new action potential, thereby reducing nerve transmission. GABAARs containing alpha-1 and beta-2 or -3 subunits exhibit synaptogenic activity; the gamma-2 subunit being necessary but not sufficient to induce rapid synaptic contacts formation. GABAARs function also as histamine receptor where histamine binds at the interface of two neighboring beta subunits and potentiates GABA response. GABAARs containing alpha, beta and epsilon subunits also permit spontaneous chloride channel activity while preserving the structural information required for GABA-gated openings. Alpha-1-mediated plasticity in the orbitofrontal cortex regulates context-dependent action selection. Together with rho subunits, may also control neuronal and glial GABAergic transmission in the cerebellum. This is Gamma-aminobutyric acid receptor subunit alpha-1 (GABRA1) from Bos taurus (Bovine).